The sequence spans 271 residues: Magnetosome protein MamX (271 aa).

Residues 1 to 10 lie on the Cytoplasmic side of the membrane; the sequence is MSSKAVAHPN. The helical transmembrane segment at 11-31 threads the bilayer; that stretch reads IAVWIMALGIAFSMALVLTAV. Over 32 to 271 the chain is Lumenal; the sequence is FNANPWEDHT…NAGGMDAEER (240 aa). Residues 48 to 71 carry the MCR (magnetochrome) 1 motif; that stretch reads IVAGMPAPHRDGREKMVCSSCHIV. Heme contacts are provided by Cys-65, Cys-68, His-69, Cys-104, Cys-107, and His-108. The MCR 2 motif lies at 87-110; it reads IVQGTPAPHVDGREKMPCASCHTI.

It belongs to the magnetosome MamX family. Requires heme as cofactor.

Its subcellular location is the magnetosome membrane. Its function is as follows. Required for correct biomineralization of the magnetosome, may be involved in redox control of biomineralization. May function with MamY, MamZ amd Mms6. The sequence is that of Magnetosome protein MamX (mamX) from Paramagnetospirillum magneticum (strain ATCC 700264 / AMB-1) (Magnetospirillum magneticum).